The following is a 471-amino-acid chain: 3-isopropylmalate dehydratase large subunit (471 aa).

Cys-347, Cys-407, and Cys-410 together coordinate [4Fe-4S] cluster.

It belongs to the aconitase/IPM isomerase family. LeuC type 1 subfamily. In terms of assembly, heterodimer of LeuC and LeuD. Requires [4Fe-4S] cluster as cofactor.

It carries out the reaction (2R,3S)-3-isopropylmalate = (2S)-2-isopropylmalate. It functions in the pathway amino-acid biosynthesis; L-leucine biosynthesis; L-leucine from 3-methyl-2-oxobutanoate: step 2/4. Functionally, catalyzes the isomerization between 2-isopropylmalate and 3-isopropylmalate, via the formation of 2-isopropylmaleate. In Vibrio parahaemolyticus serotype O3:K6 (strain RIMD 2210633), this protein is 3-isopropylmalate dehydratase large subunit.